Reading from the N-terminus, the 500-residue chain is Glycerol kinase (500 aa).

ADP is bound at residue threonine 13. The ATP site is built by threonine 13, threonine 14, and serine 15. Threonine 13 provides a ligand contact to sn-glycerol 3-phosphate. Residue arginine 17 participates in ADP binding. Sn-glycerol 3-phosphate-binding residues include arginine 83, glutamate 84, tyrosine 135, and aspartate 245. Positions 83, 84, 135, 245, and 246 each coordinate glycerol. 2 residues coordinate ADP: threonine 267 and glycine 310. Residues threonine 267, glycine 310, glutamine 314, and glycine 411 each contribute to the ATP site. Residues glycine 411 and asparagine 415 each coordinate ADP.

This sequence belongs to the FGGY kinase family. In terms of assembly, homotetramer and homodimer (in equilibrium).

The enzyme catalyses glycerol + ATP = sn-glycerol 3-phosphate + ADP + H(+). It participates in polyol metabolism; glycerol degradation via glycerol kinase pathway; sn-glycerol 3-phosphate from glycerol: step 1/1. Its activity is regulated as follows. Activated by phosphorylation and inhibited by fructose 1,6-bisphosphate (FBP). In terms of biological role, key enzyme in the regulation of glycerol uptake and metabolism. Catalyzes the phosphorylation of glycerol to yield sn-glycerol 3-phosphate. This chain is Glycerol kinase, found in Carboxydothermus hydrogenoformans (strain ATCC BAA-161 / DSM 6008 / Z-2901).